Consider the following 216-residue polypeptide: ATP phosphoribosyltransferase (216 aa).

This sequence belongs to the ATP phosphoribosyltransferase family. Short subfamily. In terms of assembly, heteromultimer composed of HisG and HisZ subunits.

The protein localises to the cytoplasm. The enzyme catalyses 1-(5-phospho-beta-D-ribosyl)-ATP + diphosphate = 5-phospho-alpha-D-ribose 1-diphosphate + ATP. It functions in the pathway amino-acid biosynthesis; L-histidine biosynthesis; L-histidine from 5-phospho-alpha-D-ribose 1-diphosphate: step 1/9. In terms of biological role, catalyzes the condensation of ATP and 5-phosphoribose 1-diphosphate to form N'-(5'-phosphoribosyl)-ATP (PR-ATP). Has a crucial role in the pathway because the rate of histidine biosynthesis seems to be controlled primarily by regulation of HisG enzymatic activity. The chain is ATP phosphoribosyltransferase from Microcystis aeruginosa (strain NIES-843 / IAM M-2473).